The primary structure comprises 185 residues: Methanol dehydrogenase activator (185 aa).

This sequence belongs to the Nudix hydrolase family. In terms of assembly, homodimer. Requires Mg(2+) as cofactor.

In terms of biological role, involved in the activation of the NAD-dependent methanol dehydrogenase (MDH). MDH activation by Act involves hydrolytic removal of the nicotinamide mononucleotide (NMN) moiety of the NAD cofactor, changing its ping-pong type of reaction mechanism into a ternary complex reaction mechanism. It requires the presence of magnesium ions and is also able to use ADP-ribose. In Bacillus methanolicus, this protein is Methanol dehydrogenase activator.